A 437-amino-acid chain; its full sequence is Enolase-related protein 1 (437 aa).

His160 and Glu169 together coordinate substrate. Catalysis depends on Glu212, which acts as the Proton donor. Asp247, Glu296, and Asp321 together coordinate Mg(2+). Substrate is bound by residues Glu296 and Asp321. Residue Lys346 is the Proton acceptor of the active site. Substrate is bound by residues 373–376 (SHRS) and Lys397.

The protein belongs to the enolase family. Mg(2+) serves as cofactor.

It carries out the reaction (2R)-2-phosphoglycerate = phosphoenolpyruvate + H2O. It functions in the pathway carbohydrate degradation; glycolysis; pyruvate from D-glyceraldehyde 3-phosphate: step 4/5. This chain is Enolase-related protein 1 (ERR1), found in Saccharomyces cerevisiae (strain ATCC 204508 / S288c) (Baker's yeast).